The primary structure comprises 127 residues: Thioredoxin domain-containing protein 8 (127 aa).

The 126-residue stretch at 2 to 127 folds into the Thioredoxin domain; sequence VKRIKNMSEL…QLEKKIQELM (126 aa). Cysteine 32 and cysteine 35 are disulfide-bonded.

This sequence belongs to the thioredoxin family. As to expression, testis-specific. Only expressed during spermiogenesis, prominently in the Golgi apparatus of pachytene spermatocytes and round and elongated spermatids, with a transient localization in the developing acrosome of round spermatids (at protein level).

Its subcellular location is the cytoplasm. The protein localises to the golgi apparatus. Functionally, may be required for post-translational modifications of proteins required for acrosomal biogenesis. May act by reducing disulfide bonds within the sperm. This is Thioredoxin domain-containing protein 8 (Txndc8) from Mus musculus (Mouse).